A 344-amino-acid polypeptide reads, in one-letter code: Holliday junction branch migration complex subunit RuvB (344 aa).

The interval 4–194 (CLLRFCYNSL…FGITGHMEYY (191 aa)) is large ATPase domain (RuvB-L). ATP is bound by residues L33, R34, G75, K78, T79, T80, 141-143 (EDF), R184, Y194, and R231. T79 lines the Mg(2+) pocket. The tract at residues 195–265 (TDIDLTEIVE…ITDKALTMLD (71 aa)) is small ATPAse domain (RuvB-S). The segment at 268–344 (HEGLDYVDQK…YEHLGYRYTE (77 aa)) is head domain (RuvB-H). Positions 304, 323, 325, and 328 each coordinate DNA.

This sequence belongs to the RuvB family. As to quaternary structure, homohexamer. Forms an RuvA(8)-RuvB(12)-Holliday junction (HJ) complex. HJ DNA is sandwiched between 2 RuvA tetramers; dsDNA enters through RuvA and exits via RuvB. An RuvB hexamer assembles on each DNA strand where it exits the tetramer. Each RuvB hexamer is contacted by two RuvA subunits (via domain III) on 2 adjacent RuvB subunits; this complex drives branch migration. In the full resolvosome a probable DNA-RuvA(4)-RuvB(12)-RuvC(2) complex forms which resolves the HJ.

The protein resides in the cytoplasm. It carries out the reaction ATP + H2O = ADP + phosphate + H(+). Its function is as follows. The RuvA-RuvB-RuvC complex processes Holliday junction (HJ) DNA during genetic recombination and DNA repair, while the RuvA-RuvB complex plays an important role in the rescue of blocked DNA replication forks via replication fork reversal (RFR). RuvA specifically binds to HJ cruciform DNA, conferring on it an open structure. The RuvB hexamer acts as an ATP-dependent pump, pulling dsDNA into and through the RuvAB complex. RuvB forms 2 homohexamers on either side of HJ DNA bound by 1 or 2 RuvA tetramers; 4 subunits per hexamer contact DNA at a time. Coordinated motions by a converter formed by DNA-disengaged RuvB subunits stimulates ATP hydrolysis and nucleotide exchange. Immobilization of the converter enables RuvB to convert the ATP-contained energy into a lever motion, pulling 2 nucleotides of DNA out of the RuvA tetramer per ATP hydrolyzed, thus driving DNA branch migration. The RuvB motors rotate together with the DNA substrate, which together with the progressing nucleotide cycle form the mechanistic basis for DNA recombination by continuous HJ branch migration. Branch migration allows RuvC to scan DNA until it finds its consensus sequence, where it cleaves and resolves cruciform DNA. The polypeptide is Holliday junction branch migration complex subunit RuvB (Streptococcus mutans serotype c (strain ATCC 700610 / UA159)).